A 603-amino-acid polypeptide reads, in one-letter code: Nuclear receptor subfamily 2 group C member 1 (603 aa).

The interval 1–178 (MATIEEIAHQ…RLQRCIAFGM (178 aa)) is required for interaction with KAT2B. Residues 110 to 185 (FDLCVVCGDK…FGMKQDSVQC (76 aa)) constitute a DNA-binding region (nuclear receptor). 2 consecutive NR C4-type zinc fingers follow at residues 113–133 (CVVC…CEGC) and 149–173 (CRGS…LQRC). Serine 197 and serine 215 each carry phosphoserine. Threonine 220 carries the post-translational modification Phosphothreonine. Threonine 222 bears the Phosphothreonine; by MAPK1 mark. Lysine 250 is covalently cross-linked (Glycyl lysine isopeptide (Lys-Gly) (interchain with G-Cter in SUMO2)). The 243-residue stretch at 348 to 590 (GSVHLITGDS…SVIPHILKME (243 aa)) folds into the NR LBD domain. Serine 581 bears the Phosphoserine; by PKC mark. Positions 584–603 (PHILKMEPADYNSQIIGHSI) are required for interaction with NRIP1. Residue lysine 588 forms a Glycyl lysine isopeptide (Lys-Gly) (interchain with G-Cter in SUMO2) linkage.

Belongs to the nuclear hormone receptor family. NR2 subfamily. As to quaternary structure, homodimer. Heterodimer; binds DNA as a heterodimer with NR2C2 required for chromatin remodeling and for binding to promoter regions such as globin DR1 repeats. Interacts with NRIP1 (via its LXXLL motifs); the interaction provides corepressor activity. Interacts with HDAC3 (via the DNA-binding domain). Interacts with HDAC4 (via the DNA-binding domain). Interacts with PIAS1; the interaction is required for sumoylation of NR2C1. Interacts with UBE2I; the interaction is required for sumoylation of NR2C1. Interacts with KAT2B; the interaction acts as a corepressor of gene expression. Interacts with ESR1; the interaction prevents homodimerization of ESR1 and suppresses its transcriptional activity and cell growth. Sumoylation requires both PIAS1 and UBE2I. Sumoylation appears to dissociate NR2C1 from the PML nuclear bodies. Enhances the interaction with NRIP1 but inhibits interaction with KAT2B. In proliferating cells, stimulation by all-trans retinoic acid, activation of MAPK1-mediated phosphorylation and recruitment to PML bodies with subsequent sumoylation, suppresses OCT4 expression. In terms of processing, phosphorylated on several serine and threonine residues. Phosphorylation on Thr-222, stimulated by all-trans retinoic acid (atRA) mediates PML location and sumoylation in proliferating cells which then modulates its association with effector molecules, KAT2B and NRIP1. Phosphorylation on Ser-581 by PKC is important for protein stability and function as activator of RARB.

It localises to the nucleus. Its subcellular location is the PML body. In terms of biological role, orphan nuclear receptor. Binds the IR7 element in the promoter of its own gene in an autoregulatory negative feedback mechanism. Primarily repressor of a broad range of genes. Binds to hormone response elements (HREs) consisting of two 5'-AGGTCA-3' half site direct repeat consensus sequences. Together with NR2C2, forms the core of the DRED (direct repeat erythroid-definitive) complex that represses embryonic and fetal globin transcription. Also activator of OCT4 gene expression. May be involved in stem cell proliferation and differentiation. Mediator of retinoic acid-regulated preadipocyte proliferation. This is Nuclear receptor subfamily 2 group C member 1 (NR2C1) from Homo sapiens (Human).